Reading from the N-terminus, the 445-residue chain is DNA polymerase IV (445 aa).

The UmuC domain maps to 49 to 229 (LAHVDCDAFY…KPVGMIWGVG (181 aa)). Asp-53 and Asp-146 together coordinate Mg(2+). Glu-147 is an active-site residue.

This sequence belongs to the DNA polymerase type-Y family. Monomer. Requires Mg(2+) as cofactor.

The protein localises to the cytoplasm. The enzyme catalyses DNA(n) + a 2'-deoxyribonucleoside 5'-triphosphate = DNA(n+1) + diphosphate. Its function is as follows. Poorly processive, error-prone DNA polymerase involved in untargeted mutagenesis. Copies undamaged DNA at stalled replication forks, which arise in vivo from mismatched or misaligned primer ends. These misaligned primers can be extended by PolIV. Exhibits no 3'-5' exonuclease (proofreading) activity. May be involved in translesional synthesis, in conjunction with the beta clamp from PolIII. The polypeptide is DNA polymerase IV (Brucella melitensis biotype 1 (strain ATCC 23456 / CCUG 17765 / NCTC 10094 / 16M)).